Reading from the N-terminus, the 259-residue chain is MRKRVDPPAGGRLAPGITPANSNTRISAGALPRAPAQPAPLASGNLGLNSDRLRQAMVQRLRTQGIVDERVLNAMAAVPRHLFVDEALASRAYEDAALPIGHSQTISQPWVVARMIAAVCEDRAPARVLEVGAGCGYQAAVLAQIVREVHAIERIRGLYELARGHLRALRLATRVRLIHGDGMLGVPGVAPFDAIVVAAAGLAIPQALLDQLAPGGRLIAPEGSTHQRLVLIERTGATAWSRKELEAVRFVPLRAGIQS.

Residues 1 to 25 are disordered; sequence MRKRVDPPAGGRLAPGITPANSNTR. Residue Ser-107 is part of the active site.

It belongs to the methyltransferase superfamily. L-isoaspartyl/D-aspartyl protein methyltransferase family.

Its subcellular location is the cytoplasm. The catalysed reaction is [protein]-L-isoaspartate + S-adenosyl-L-methionine = [protein]-L-isoaspartate alpha-methyl ester + S-adenosyl-L-homocysteine. Its function is as follows. Catalyzes the methyl esterification of L-isoaspartyl residues in peptides and proteins that result from spontaneous decomposition of normal L-aspartyl and L-asparaginyl residues. It plays a role in the repair and/or degradation of damaged proteins. The protein is Protein-L-isoaspartate O-methyltransferase of Bordetella bronchiseptica (strain ATCC BAA-588 / NCTC 13252 / RB50) (Alcaligenes bronchisepticus).